We begin with the raw amino-acid sequence, 106 residues long: Nucleoid-associated protein bll8115 (106 aa).

This sequence belongs to the YbaB/EbfC family. In terms of assembly, homodimer.

It localises to the cytoplasm. It is found in the nucleoid. Its function is as follows. Binds to DNA and alters its conformation. May be involved in regulation of gene expression, nucleoid organization and DNA protection. The protein is Nucleoid-associated protein bll8115 of Bradyrhizobium diazoefficiens (strain JCM 10833 / BCRC 13528 / IAM 13628 / NBRC 14792 / USDA 110).